Consider the following 141-residue polypeptide: Hemoglobin subunit alpha-1/2 (141 aa).

The 141-residue stretch at 1–141 (VLSPTDKTNV…VSTVLTSKYR (141 aa)) folds into the Globin domain. Residue Ser3 is modified to Phosphoserine. At Lys7 the chain carries N6-succinyllysine. The residue at position 8 (Thr8) is a Phosphothreonine. An N6-succinyllysine modification is found at Lys11. Position 16 is an N6-acetyllysine; alternate (Lys16). N6-succinyllysine; alternate is present on Lys16. Tyr24 bears the Phosphotyrosine mark. Lys40 carries the post-translational modification N6-succinyllysine. A Phosphoserine modification is found at Ser49. His58 provides a ligand contact to O2. Position 87 (His87) interacts with heme b. Ser102 carries the phosphoserine modification. Phosphothreonine is present on Thr108. Ser124 is subject to Phosphoserine. Thr134 and Thr137 each carry phosphothreonine. Ser138 bears the Phosphoserine mark.

Belongs to the globin family. In terms of assembly, heterotetramer of two alpha chains and two beta chains. As to expression, red blood cells.

Functionally, involved in oxygen transport from the lung to the various peripheral tissues. The protein is Hemoglobin subunit alpha-1/2 of Tapirus terrestris (Lowland tapir).